The primary structure comprises 156 residues: Small ribosomal subunit protein uS7A/uS7B (156 aa).

This sequence belongs to the universal ribosomal protein uS7 family. In terms of assembly, part of the 30S ribosomal subunit. Contacts proteins S9 and S11.

Its function is as follows. One of the primary rRNA binding proteins, it binds directly to 16S rRNA where it nucleates assembly of the head domain of the 30S subunit. Is located at the subunit interface close to the decoding center, probably blocks exit of the E-site tRNA. In Bartonella bacilliformis (strain ATCC 35685 / KC583 / Herrer 020/F12,63), this protein is Small ribosomal subunit protein uS7A/uS7B.